A 725-amino-acid chain; its full sequence is N-alpha-acetyltransferase 35, NatC auxiliary subunit (725 aa).

Residues 548–573 (ERIMEEQQKGRSSKKTKKKKKVRPLS) form a disordered region. The span at 558 to 571 (RSSKKTKKKKKVRP) shows a compositional bias: basic residues.

The protein belongs to the MAK10 family. As to quaternary structure, component of the N-terminal acetyltransferase C (NatC) complex.

It localises to the cytoplasm. Functionally, auxillary component of the N-terminal acetyltransferase C (NatC) complex which catalyzes acetylation of N-terminal methionine residues. N-terminal acetylation protects proteins from ubiquitination and degradation by the N-end rule pathway. The chain is N-alpha-acetyltransferase 35, NatC auxiliary subunit (NAA35) from Gallus gallus (Chicken).